Here is a 443-residue protein sequence, read N- to C-terminus: Mitochondrial enolase superfamily member 1 (443 aa).

Residues 24–26 (GAD) and Tyr-34 each bind substrate. Ser-148 bears the Phosphoserine mark. Lys-220 lines the substrate pocket. Lys-222 acts as the Proton donor/acceptor in catalysis. Asp-250 is a binding site for Mg(2+). Substrate-binding positions include Asn-252, Glu-276, Glu-305, 355 to 357 (HAG), and Glu-386. Positions 276 and 305 each coordinate Mg(2+). His-355 is an active-site residue.

This sequence belongs to the mandelate racemase/muconate lactonizing enzyme family. ENOSF1 subfamily. Requires Mg(2+) as cofactor. Could be sumoylated.

Its subcellular location is the mitochondrion. It catalyses the reaction L-fuconate = 2-dehydro-3-deoxy-L-fuconate + H2O. Its function is as follows. Plays a role in the catabolism of L-fucose, a sugar that is part of the carbohydrates that are attached to cellular glycoproteins. Catalyzes the dehydration of L-fuconate to 2-keto-3-deoxy-L-fuconate by the abstraction of the 2-proton to generate an enediolate intermediate that is stabilized by the magnesium ion. The polypeptide is Mitochondrial enolase superfamily member 1 (ENOSF1) (Homo sapiens (Human)).